The primary structure comprises 155 residues: Large ribosomal subunit protein uL11 (155 aa).

The protein belongs to the universal ribosomal protein uL11 family. In terms of assembly, part of the ribosomal stalk of the 50S ribosomal subunit. Interacts with L10 and the large rRNA to form the base of the stalk. L10 forms an elongated spine to which L12 dimers bind in a sequential fashion forming a multimeric L10(L12)X complex.

Forms part of the ribosomal stalk which helps the ribosome interact with GTP-bound translation factors. In Picrophilus torridus (strain ATCC 700027 / DSM 9790 / JCM 10055 / NBRC 100828 / KAW 2/3), this protein is Large ribosomal subunit protein uL11.